A 468-amino-acid chain; its full sequence is ATP synthase subunit beta (468 aa).

155-162 lines the ATP pocket; it reads GGAGVGKT.

This sequence belongs to the ATPase alpha/beta chains family. F-type ATPases have 2 components, CF(1) - the catalytic core - and CF(0) - the membrane proton channel. CF(1) has five subunits: alpha(3), beta(3), gamma(1), delta(1), epsilon(1). CF(0) has three main subunits: a(1), b(2) and c(9-12). The alpha and beta chains form an alternating ring which encloses part of the gamma chain. CF(1) is attached to CF(0) by a central stalk formed by the gamma and epsilon chains, while a peripheral stalk is formed by the delta and b chains.

It localises to the cell membrane. It catalyses the reaction ATP + H2O + 4 H(+)(in) = ADP + phosphate + 5 H(+)(out). Its function is as follows. Produces ATP from ADP in the presence of a proton gradient across the membrane. The catalytic sites are hosted primarily by the beta subunits. The polypeptide is ATP synthase subunit beta (Streptococcus pneumoniae (strain ATCC BAA-255 / R6)).